The primary structure comprises 472 residues: 3-isopropylmalate dehydratase large subunit (472 aa).

Residues Cys353, Cys414, and Cys417 each contribute to the [4Fe-4S] cluster site.

Belongs to the aconitase/IPM isomerase family. LeuC type 1 subfamily. Heterodimer of LeuC and LeuD. [4Fe-4S] cluster serves as cofactor.

The enzyme catalyses (2R,3S)-3-isopropylmalate = (2S)-2-isopropylmalate. Its pathway is amino-acid biosynthesis; L-leucine biosynthesis; L-leucine from 3-methyl-2-oxobutanoate: step 2/4. Its function is as follows. Catalyzes the isomerization between 2-isopropylmalate and 3-isopropylmalate, via the formation of 2-isopropylmaleate. This Psychrobacter arcticus (strain DSM 17307 / VKM B-2377 / 273-4) protein is 3-isopropylmalate dehydratase large subunit.